Reading from the N-terminus, the 439-residue chain is UDP-N-acetylmuramoylalanine--D-glutamate ligase (439 aa).

112–118 contacts ATP; it reads GSNGKST.

The protein belongs to the MurCDEF family.

Its subcellular location is the cytoplasm. It carries out the reaction UDP-N-acetyl-alpha-D-muramoyl-L-alanine + D-glutamate + ATP = UDP-N-acetyl-alpha-D-muramoyl-L-alanyl-D-glutamate + ADP + phosphate + H(+). It participates in cell wall biogenesis; peptidoglycan biosynthesis. Its function is as follows. Cell wall formation. Catalyzes the addition of glutamate to the nucleotide precursor UDP-N-acetylmuramoyl-L-alanine (UMA). The polypeptide is UDP-N-acetylmuramoylalanine--D-glutamate ligase (Mannheimia succiniciproducens (strain KCTC 0769BP / MBEL55E)).